A 195-amino-acid chain; its full sequence is Thymidine kinase (195 aa).

Residues 9–16 and 87–90 contribute to the ATP site; these read STMNAGKS and DEAQ. E88 functions as the Proton acceptor in the catalytic mechanism. 4 residues coordinate Zn(2+): C145, C147, C182, and H185.

This sequence belongs to the thymidine kinase family. Homotetramer.

It localises to the cytoplasm. The catalysed reaction is thymidine + ATP = dTMP + ADP + H(+). In Mannheimia succiniciproducens (strain KCTC 0769BP / MBEL55E), this protein is Thymidine kinase.